The chain runs to 324 residues: Phospho-N-acetylmuramoyl-pentapeptide-transferase (324 aa).

Helical transmembrane passes span Val-5–Ile-25, Gly-55–Phe-75, Thr-81–Ile-101, Leu-122–Ile-142, Val-147–Ser-167, Leu-176–Trp-196, Val-203–His-223, Val-227–Leu-247, Leu-250–Ile-270, and Val-302–Val-322.

This sequence belongs to the glycosyltransferase 4 family. MraY subfamily. Mg(2+) is required as a cofactor.

The protein localises to the cell membrane. It carries out the reaction UDP-N-acetyl-alpha-D-muramoyl-L-alanyl-gamma-D-glutamyl-meso-2,6-diaminopimeloyl-D-alanyl-D-alanine + di-trans,octa-cis-undecaprenyl phosphate = di-trans,octa-cis-undecaprenyl diphospho-N-acetyl-alpha-D-muramoyl-L-alanyl-D-glutamyl-meso-2,6-diaminopimeloyl-D-alanyl-D-alanine + UMP. The protein operates within cell wall biogenesis; peptidoglycan biosynthesis. Catalyzes the initial step of the lipid cycle reactions in the biosynthesis of the cell wall peptidoglycan: transfers peptidoglycan precursor phospho-MurNAc-pentapeptide from UDP-MurNAc-pentapeptide onto the lipid carrier undecaprenyl phosphate, yielding undecaprenyl-pyrophosphoryl-MurNAc-pentapeptide, known as lipid I. The protein is Phospho-N-acetylmuramoyl-pentapeptide-transferase of Anoxybacillus flavithermus (strain DSM 21510 / WK1).